Consider the following 436-residue polypeptide: Methanethiol oxidase (436 aa).

A signal peptide spans 1-24; it reads MKRREFGALAAGALAMGLPFRAFA.

This sequence belongs to the selenium-binding protein family.

Its subcellular location is the periplasm. It carries out the reaction methanethiol + O2 + H2O = hydrogen sulfide + formaldehyde + H2O2 + H(+). It functions in the pathway organosulfur degradation. Catalyzes the oxidation of methanethiol. The protein is Methanethiol oxidase of Ruegeria pomeroyi (strain ATCC 700808 / DSM 15171 / DSS-3) (Silicibacter pomeroyi).